The sequence spans 76 residues: Serine proteinase inhibitor IA-2 (76 aa).

At serine 1 the chain carries N-acetylserine.

This sequence belongs to the protease inhibitor I9 family.

Specifically inhibits an intracellular serine proteinase (proteinase A). This chain is Serine proteinase inhibitor IA-2, found in Pleurotus ostreatus (Oyster mushroom).